A 282-amino-acid chain; its full sequence is Pantothenate synthetase (282 aa).

30–37 (MGFLHDGH) contacts ATP. His37 functions as the Proton donor in the catalytic mechanism. Gln60 contributes to the (R)-pantoate binding site. Residue Gln60 coordinates beta-alanine. ATP is bound at residue 146–149 (GQKD). Position 152 (Gln152) interacts with (R)-pantoate. ATP contacts are provided by residues Ile175 and 183 to 186 (KSSR).

It belongs to the pantothenate synthetase family. As to quaternary structure, homodimer.

It is found in the cytoplasm. The catalysed reaction is (R)-pantoate + beta-alanine + ATP = (R)-pantothenate + AMP + diphosphate + H(+). It functions in the pathway cofactor biosynthesis; (R)-pantothenate biosynthesis; (R)-pantothenate from (R)-pantoate and beta-alanine: step 1/1. Catalyzes the condensation of pantoate with beta-alanine in an ATP-dependent reaction via a pantoyl-adenylate intermediate. This chain is Pantothenate synthetase, found in Campylobacter jejuni subsp. doylei (strain ATCC BAA-1458 / RM4099 / 269.97).